A 230-amino-acid polypeptide reads, in one-letter code: Phosphoribosylformylglycinamidine synthase subunit PurQ (230 aa).

The region spanning 2–226 (RVAVIVFPGS…LKTWREQNSV (225 aa)) is the Glutamine amidotransferase type-1 domain. C86 serves as the catalytic Nucleophile. Catalysis depends on residues H195 and E197.

As to quaternary structure, part of the FGAM synthase complex composed of 1 PurL, 1 PurQ and 2 PurS subunits.

The protein resides in the cytoplasm. It catalyses the reaction N(2)-formyl-N(1)-(5-phospho-beta-D-ribosyl)glycinamide + L-glutamine + ATP + H2O = 2-formamido-N(1)-(5-O-phospho-beta-D-ribosyl)acetamidine + L-glutamate + ADP + phosphate + H(+). The catalysed reaction is L-glutamine + H2O = L-glutamate + NH4(+). It participates in purine metabolism; IMP biosynthesis via de novo pathway; 5-amino-1-(5-phospho-D-ribosyl)imidazole from N(2)-formyl-N(1)-(5-phospho-D-ribosyl)glycinamide: step 1/2. Part of the phosphoribosylformylglycinamidine synthase complex involved in the purines biosynthetic pathway. Catalyzes the ATP-dependent conversion of formylglycinamide ribonucleotide (FGAR) and glutamine to yield formylglycinamidine ribonucleotide (FGAM) and glutamate. The FGAM synthase complex is composed of three subunits. PurQ produces an ammonia molecule by converting glutamine to glutamate. PurL transfers the ammonia molecule to FGAR to form FGAM in an ATP-dependent manner. PurS interacts with PurQ and PurL and is thought to assist in the transfer of the ammonia molecule from PurQ to PurL. This Brevibacillus brevis (strain 47 / JCM 6285 / NBRC 100599) protein is Phosphoribosylformylglycinamidine synthase subunit PurQ.